The sequence spans 185 residues: Ribosome-recycling factor (185 aa).

The protein belongs to the RRF family.

The protein localises to the cytoplasm. In terms of biological role, responsible for the release of ribosomes from messenger RNA at the termination of protein biosynthesis. May increase the efficiency of translation by recycling ribosomes from one round of translation to another. The sequence is that of Ribosome-recycling factor from Nocardioides sp. (strain ATCC BAA-499 / JS614).